Consider the following 236-residue polypeptide: Purine nucleoside phosphorylase DeoD-type 2 (236 aa).

Histidine 5 contacts a purine D-ribonucleoside. Phosphate contacts are provided by residues glycine 21, arginine 25, arginine 44, and arginine 88–serine 91. A purine D-ribonucleoside contacts are provided by residues aspartate 180–glutamate 182 and serine 204–aspartate 205. The active-site Proton donor is aspartate 205.

This sequence belongs to the PNP/UDP phosphorylase family. In terms of assembly, homohexamer; trimer of homodimers.

The enzyme catalyses a purine D-ribonucleoside + phosphate = a purine nucleobase + alpha-D-ribose 1-phosphate. It catalyses the reaction a purine 2'-deoxy-D-ribonucleoside + phosphate = a purine nucleobase + 2-deoxy-alpha-D-ribose 1-phosphate. Catalyzes the reversible phosphorolytic breakdown of the N-glycosidic bond in the beta-(deoxy)ribonucleoside molecules, with the formation of the corresponding free purine bases and pentose-1-phosphate. The sequence is that of Purine nucleoside phosphorylase DeoD-type 2 from Photobacterium profundum (strain SS9).